Here is a 543-residue protein sequence, read N- to C-terminus: Glutamyl-tRNA(Gln) amidotransferase subunit A, chloroplastic/mitochondrial (543 aa).

Residues Lys123 and Ser198 each act as charge relay system in the active site. The Acyl-ester intermediate role is filled by Ser222.

It belongs to the amidase family. GatA subfamily. Subunit of the heterotrimeric GatCAB amidotransferase (AdT) complex, composed of A, B and C subunits.

It localises to the mitochondrion. The protein localises to the plastid. It is found in the chloroplast stroma. The enzyme catalyses L-glutamyl-tRNA(Gln) + L-glutamine + ATP + H2O = L-glutaminyl-tRNA(Gln) + L-glutamate + ADP + phosphate + H(+). Allows the formation of correctly charged Gln-tRNA(Gln) through the transamidation of misacylated Glu-tRNA(Gln) in chloroplasts and mitochondria. The reaction takes place in the presence of glutamine and ATP through an activated gamma-phospho-Glu-tRNA(Gln). This Oryza sativa subsp. indica (Rice) protein is Glutamyl-tRNA(Gln) amidotransferase subunit A, chloroplastic/mitochondrial.